The sequence spans 370 residues: S-adenosylmethionine decarboxylase proenzyme (370 aa).

Phe-28 contributes to the substrate binding site. Residues Glu-29 and Glu-32 contribute to the active site. Position 85 (Glu-85) interacts with substrate. Residue Ser-86 is the Schiff-base intermediate with substrate; via pyruvic acid of the active site. Ser-86 carries the post-translational modification Pyruvic acid (Ser); by autocatalysis. Cys-100 functions as the Proton donor; for catalytic activity in the catalytic mechanism. Active-site proton acceptor; for processing activity residues include Ser-249 and His-262. Glu-266 provides a ligand contact to substrate.

Belongs to the eukaryotic AdoMetDC family. Forms a heterodimer with catalytically inactive AdoMetDC prozyme; heterodimerization is required to activate AdoMetDC. Pyruvate is required as a cofactor. In terms of processing, is synthesized initially as an inactive proenzyme. Formation of the active enzyme involves a self-maturation process in which the active site pyruvoyl group is generated from an internal serine residue via an autocatalytic post-translational modification. Two non-identical subunits are generated from the proenzyme in this reaction, and the pyruvate is formed at the N-terminus of the alpha chain, which is derived from the carboxyl end of the proenzyme. The post-translation cleavage follows an unusual pathway, termed non-hydrolytic serinolysis, in which the side chain hydroxyl group of the serine supplies its oxygen atom to form the C-terminus of the beta chain, while the remainder of the serine residue undergoes an oxidative deamination to produce ammonia and the pyruvoyl group blocking the N-terminus of the alpha chain.

It carries out the reaction S-adenosyl-L-methionine + H(+) = S-adenosyl 3-(methylsulfanyl)propylamine + CO2. Its pathway is amine and polyamine biosynthesis; S-adenosylmethioninamine biosynthesis; S-adenosylmethioninamine from S-adenosyl-L-methionine: step 1/1. Its activity is regulated as follows. Allosterically activated by AdoMetDC prozyme. Activated by putrescine and to a lesser extent by spermidine, norspermidine and spermine. Inhibited by 5'-([(Z)-4-amino-2-butenyl]methylamino)-5'-deoxyadenosine (MDL 73811). In association with the catalytically inactive AdoMetDC prozyme, catalyzes the decarboxylation of S-adenosyl-L-methionine which is essential for the biosynthesis of the polyamine spermidine. Required for growth and survival during the bloodstream life cycle stage. This is S-adenosylmethionine decarboxylase proenzyme from Trypanosoma brucei brucei.